Reading from the N-terminus, the 339-residue chain is DNA-directed RNA polymerase RPB7 homolog (339 aa).

It belongs to the Asfivirus DNA-directed RNA polymerase RPB7 homolog family. Part of the viral DNA-directed RNA polymerase that consists of 8 polII-like subunits (RPB1, RPB2, RPB3, RPB5, RPB6, RPB7, RPB9, RPB10), a capping enzyme and a termination factor.

Its subcellular location is the host cytoplasm. It is found in the virion. Functionally, component of the DNA-directed RNA polymerase (RNAP) that catalyzes the transcription in the cytoplasm of viral DNA into RNA using the four ribonucleoside triphosphates as substrates. In Ornithodoros (relapsing fever ticks), this protein is DNA-directed RNA polymerase RPB7 homolog.